We begin with the raw amino-acid sequence, 432 residues long: UPF0597 protein APL_1605 (432 aa).

It belongs to the UPF0597 family.

The sequence is that of UPF0597 protein APL_1605 from Actinobacillus pleuropneumoniae serotype 5b (strain L20).